Here is a 496-residue protein sequence, read N- to C-terminus: Cytochrome P450 71D95 (496 aa).

The chain crosses the membrane as a helical; Signal-anchor span at residues 2–22 (ELQISSAIIILVATFVASLLI). Cys436 serves as a coordination point for heme.

Belongs to the cytochrome P450 family. Requires heme as cofactor.

It is found in the endoplasmic reticulum membrane. It catalyses the reaction (4S)-limonene + reduced [NADPH--hemoprotein reductase] + O2 = (1S,6R)-isopiperitenol + oxidized [NADPH--hemoprotein reductase] + H2O + H(+). Hydroxylates both (+)- and (-)-limonene to (+) and (-)-trans-isopiperitenol. This is Cytochrome P450 71D95 (CYP71D95) from Mentha spicata (Spearmint).